Consider the following 797-residue polypeptide: Leucine-rich repeat-containing protein AAC1 (797 aa).

Residues 1–12 (MKRTSNRNEEAT) show a composition bias toward basic and acidic residues. Disordered regions lie at residues 1 to 20 (MKRT…SSTT), 51 to 103 (YSLF…TTTT), 125 to 148 (NLPT…TTTT), and 307 to 333 (HSTS…TITA). Residues 55–81 (NEPNNDNDTNSSTRPNKQQKLLKSNES) show a composition bias toward polar residues. The segment covering 82–103 (TTSTTTTTTPITTTTTTTTTTT) has biased composition (low complexity). Over residues 313–326 (SSPPPPPPPPPPQI) the composition is skewed to pro residues. LRR repeat units lie at residues 376–397 (KLKK…DFFS), 406–425 (TLET…QLLS), 435–456 (VLKR…YLNK), 464–484 (QLET…IMMK), 492–513 (SLKE…DFGK), 514–535 (SITS…KGLS), 543–564 (SITS…KSLS), 572–593 (TLKF…DHLV), 601–622 (SIHS…TLSQ), and 633–653 (PFKY…KKLI).

This Dictyostelium discoideum (Social amoeba) protein is Leucine-rich repeat-containing protein AAC1 (AAC1).